The following is a 205-amino-acid chain: High frequency lysogenization protein HflD homolog (205 aa).

Belongs to the HflD family.

The protein resides in the cytoplasm. It is found in the cell inner membrane. The polypeptide is High frequency lysogenization protein HflD homolog (Vibrio parahaemolyticus serotype O3:K6 (strain RIMD 2210633)).